Here is a 273-residue protein sequence, read N- to C-terminus: Nitrogenase iron protein (273 aa).

8–15 (GKGGIGKS) is an ATP binding site. Cys-94 contacts [4Fe-4S] cluster. At Arg-97 the chain carries ADP-ribosylarginine; by dinitrogenase reductase ADP-ribosyltransferase. Residue Cys-130 coordinates [4Fe-4S] cluster.

It belongs to the NifH/BchL/ChlL family. Homodimer. The cofactor is [4Fe-4S] cluster. In terms of processing, the reversible ADP-ribosylation of Arg-97 inactivates the nitrogenase reductase and regulates nitrogenase activity.

It carries out the reaction N2 + 8 reduced [2Fe-2S]-[ferredoxin] + 16 ATP + 16 H2O = H2 + 8 oxidized [2Fe-2S]-[ferredoxin] + 2 NH4(+) + 16 ADP + 16 phosphate + 6 H(+). In terms of biological role, the key enzymatic reactions in nitrogen fixation are catalyzed by the nitrogenase complex, which has 2 components: the iron protein and the molybdenum-iron protein. This is Nitrogenase iron protein from Desulforapulum autotrophicum (strain ATCC 43914 / DSM 3382 / VKM B-1955 / HRM2) (Desulfobacterium autotrophicum).